The following is a 432-amino-acid chain: 3-phosphoshikimate 1-carboxyvinyltransferase (432 aa).

Positions 22, 23, and 27 each coordinate 3-phosphoshikimate. A phosphoenolpyruvate-binding site is contributed by Lys-22. The phosphoenolpyruvate site is built by Gly-96 and Arg-127. 3-phosphoshikimate is bound by residues Ser-173, Ser-174, Gln-175, Ser-201, Asp-316, Asn-339, and Lys-343. Phosphoenolpyruvate is bound at residue Gln-175. Asp-316 functions as the Proton acceptor in the catalytic mechanism. Residues Arg-347, Arg-391, and Lys-416 each contribute to the phosphoenolpyruvate site.

This sequence belongs to the EPSP synthase family. In terms of assembly, monomer.

The protein resides in the cytoplasm. It carries out the reaction 3-phosphoshikimate + phosphoenolpyruvate = 5-O-(1-carboxyvinyl)-3-phosphoshikimate + phosphate. It participates in metabolic intermediate biosynthesis; chorismate biosynthesis; chorismate from D-erythrose 4-phosphate and phosphoenolpyruvate: step 6/7. Its function is as follows. Catalyzes the transfer of the enolpyruvyl moiety of phosphoenolpyruvate (PEP) to the 5-hydroxyl of shikimate-3-phosphate (S3P) to produce enolpyruvyl shikimate-3-phosphate and inorganic phosphate. In Haemophilus influenzae (strain PittGG), this protein is 3-phosphoshikimate 1-carboxyvinyltransferase.